The primary structure comprises 278 residues: Probable endonuclease 4 (278 aa).

His-67, His-107, Glu-141, Asp-173, His-176, His-210, Asp-223, His-225, and Glu-255 together coordinate Zn(2+).

Belongs to the AP endonuclease 2 family. The cofactor is Zn(2+).

The catalysed reaction is Endonucleolytic cleavage to 5'-phosphooligonucleotide end-products.. Its function is as follows. Endonuclease IV plays a role in DNA repair. It cleaves phosphodiester bonds at apurinic or apyrimidinic (AP) sites, generating a 3'-hydroxyl group and a 5'-terminal sugar phosphate. The chain is Probable endonuclease 4 from Natronomonas pharaonis (strain ATCC 35678 / DSM 2160 / CIP 103997 / JCM 8858 / NBRC 14720 / NCIMB 2260 / Gabara) (Halobacterium pharaonis).